The following is a 704-amino-acid chain: Metabotropic glutamate receptor-like protein K (704 aa).

The first 21 residues, 1-21 (MIKLILSIILIICFIINSIES), serve as a signal peptide directing secretion. Over 22–383 (FKMITLTTGP…SKVEFQRSIQ (362 aa)) the chain is Extracellular. 8 N-linked (GlcNAc...) asparagine glycosylation sites follow: asparagine 66, asparagine 104, asparagine 256, asparagine 286, asparagine 308, asparagine 337, asparagine 343, and asparagine 368. Residues 384–404 (IGFSIVSGLLIGFVILMMIGI) form a helical membrane-spanning segment. Residues 405-419 (VKYQDTPSIRSASPS) lie on the Cytoplasmic side of the membrane. A helical membrane pass occupies residues 420 to 440 (FLNLTLLGGVIIFIGIIVWVA). Topologically, residues 441–455 (PISTHQCNARFWLVT) are extracellular. Residues 456–476 (IGFSTLIGSLVVKNIRIWLIF) form a helical membrane-spanning segment. Residues 477-492 (DNPELKIRTITNNQLY) are Cytoplasmic-facing. A helical transmembrane segment spans residues 493-513 (PWVGLCLVINIVLMSIITTVG). At 514–541 (DLKAIEAQGIDSLGKFEYMTICKMNYTG) the chain is on the extracellular side. An N-linked (GlcNAc...) asparagine glycan is attached at asparagine 538. Residues 542–562 (AATLYSILAYFGTLLLVGVFV) form a helical membrane-spanning segment. At 563-578 (SWKIRIVHIEEFSECT) the chain is on the cytoplasmic side. Residues 579–599 (AIAKTLYSISFCLFVIVPLMI) form a helical membrane-spanning segment. Over 600–608 (SPQDKQSET) the chain is Extracellular. A helical membrane pass occupies residues 609–629 (IILCVTGIFITTGALLIFFLP). Topologically, residues 630-704 (KFWRIFGNEK…NESSLSNETK (75 aa)) are cytoplasmic. Disordered stretches follow at residues 657–677 (ARAESANRNNSSNSFGFSKSS) and 685–704 (SGIESLNDDSNESSLSNETK).

This sequence in the N-terminal section; belongs to the BMP lipoprotein family. The protein in the C-terminal section; belongs to the G-protein coupled receptor 3 family. GABA-B receptor subfamily.

The protein resides in the membrane. The polypeptide is Metabotropic glutamate receptor-like protein K (grlK) (Dictyostelium discoideum (Social amoeba)).